The chain runs to 374 residues: Histone acetyltransferase type B catalytic subunit (374 aa).

2 interaction with histone H4 N-terminus regions span residues 42-44 (DSE) and 194-196 (YKY). Residues 135–303 (VVYKSSLVDD…ESSRKSLKLE (169 aa)) enclose the N-acetyltransferase domain. The interaction with HAT2 stretch occupies residues 197–205 (WHYLGAKSF). Residues 220 to 222 (FLI) and 227 to 233 (QNKGHGS) contribute to the acetyl-CoA site. Catalysis depends on E255, which acts as the Proton donor/acceptor. Acetyl-CoA-binding residues include N258 and R267. The residue at position 354 (S354) is a Phosphoserine.

This sequence belongs to the HAT1 family. As to quaternary structure, component of the HAT-B complex composed of at least HAT1 and HAT2. In the cytoplasm, this complex binds to the histone H4 tail. In the nucleus, the HAT-B complex has an additional component, the histone H3/H4 chaperone HIF1.

It is found in the cytoplasm. The protein localises to the nucleus. The enzyme catalyses L-lysyl-[protein] + acetyl-CoA = N(6)-acetyl-L-lysyl-[protein] + CoA + H(+). In terms of biological role, catalytic component of the histone acetylase B (HAT-B) complex. Acetylates 'Lys-12' of free histone H4 in the cytoplasm. The complex is also found in the nucleus, however it is not certain that it modifies histone H4 when packaged in chromatin. Histone H4 'Lys-12' acetylation is required for telomeric silencing. Has intrinsic substrate specificity that modifies lysine in recognition sequence GXGKXG. Involved in DNA double-strand break repair. The polypeptide is Histone acetyltransferase type B catalytic subunit (HAT1) (Saccharomyces cerevisiae (strain ATCC 204508 / S288c) (Baker's yeast)).